The chain runs to 275 residues: Polyamine aminopropyltransferase (275 aa).

One can recognise a PABS domain in the interval 2–235 (EFWFTEKQTE…GMWTFTIGSK (234 aa)). Position 31 (glutamine 31) interacts with S-methyl-5'-thioadenosine. 2 residues coordinate spermidine: histidine 62 and aspartate 86. S-methyl-5'-thioadenosine-binding positions include aspartate 106 and 137 to 138 (DG). Aspartate 155 acts as the Proton acceptor in catalysis. 155–158 (DSTE) serves as a coordination point for spermidine. Residue proline 162 coordinates S-methyl-5'-thioadenosine.

This sequence belongs to the spermidine/spermine synthase family. Homodimer or homotetramer.

The protein resides in the cytoplasm. It carries out the reaction S-adenosyl 3-(methylsulfanyl)propylamine + putrescine = S-methyl-5'-thioadenosine + spermidine + H(+). It participates in amine and polyamine biosynthesis; spermidine biosynthesis; spermidine from putrescine: step 1/1. In terms of biological role, catalyzes the irreversible transfer of a propylamine group from the amino donor S-adenosylmethioninamine (decarboxy-AdoMet) to putrescine (1,4-diaminobutane) to yield spermidine. The polypeptide is Polyamine aminopropyltransferase (Shouchella clausii (strain KSM-K16) (Alkalihalobacillus clausii)).